A 181-amino-acid chain; its full sequence is Reverse rubrerythrin-1 (181 aa).

In terms of domain architecture, Rubredoxin-like spans 1 to 35 (MKKFKCVVCGYIYTGEDAPEKCPVCGAGKDKFVEV). Fe cation contacts are provided by Cys6, Cys9, Cys22, Cys25, Glu69, Glu102, Glu132, Glu165, and His168. Positions 52-181 (KGVDKEVLEG…FRGLLNRYFK (130 aa)) constitute a Ferritin-like diiron domain.

In terms of assembly, homodimer. Fe(3+) serves as cofactor.

The catalysed reaction is H2O2 + NADH + H(+) = NAD(+) + 2 H2O. Functions as the terminal component of an NADH peroxidase (NADH:H(2)O(2) oxidoreductase) when using NADH:rubredoxin oxidoreductase (NROR) and rubredoxin (Rd) as electron transport intermediaries from NADH to revRbr 1. Plays an important role in the oxidative stress defense system in C.acetobutylicum, an obligate anaerobic bacterium. Also exhibits NADH oxidase (NADH:O(2) oxidoreductase) activity in vitro, which is 100-fold lesser than that of FprA1/2 using the same electron transfer components. Therefore, its predominant function is most likely as a scavenger of its preferred substrate, H(2)O(2). This is Reverse rubrerythrin-1 (rbr3A) from Clostridium acetobutylicum (strain ATCC 824 / DSM 792 / JCM 1419 / IAM 19013 / LMG 5710 / NBRC 13948 / NRRL B-527 / VKM B-1787 / 2291 / W).